The sequence spans 216 residues: Cytochrome c-type protein Cgr1 (216 aa).

Residues 18-38 (WPIVVGVVVVVLIAAGAGFWV) form a helical membrane-spanning segment. Heme is bound by residues C46, C50, H51, C95, C98, H99, C142, C147, H148, C176, C179, H180, C190, C193, and H194.

The protein belongs to the multiheme cytochrome c family. As to quaternary structure, may form a membrane-associated complex with Cgr2. Binds 5 heme groups per subunit.

Its subcellular location is the cell membrane. Functionally, probably transfers electrons from a membrane-associated electron donor (e.g. the membrane quinone pool) to the [4Fe-4S] cluster of the Cgr2 reductase via its covalently bound heme groups. In Eggerthella lenta (strain ATCC 25559 / DSM 2243 / CCUG 17323 / JCM 9979 / KCTC 3265 / NCTC 11813 / VPI 0255 / 1899 B) (Eubacterium lentum), this protein is Cytochrome c-type protein Cgr1.